Here is a 118-residue protein sequence, read N- to C-terminus: ATP-dependent Clp protease adapter protein ClpS (118 aa).

Residues Met-1–Asp-24 form a disordered region.

This sequence belongs to the ClpS family. In terms of assembly, binds to the N-terminal domain of the chaperone ClpA.

Functionally, involved in the modulation of the specificity of the ClpAP-mediated ATP-dependent protein degradation. In Hyphomonas neptunium (strain ATCC 15444), this protein is ATP-dependent Clp protease adapter protein ClpS.